Consider the following 699-residue polypeptide: uncharacterized protein (699 aa).

Disordered stretches follow at residues 175-208 (PTLGVSEFPSKHGDHSDSKTYESPISNSQAASLS), 289-364 (PTAK…EEPD), and 539-603 (RAKE…KEYL). Residues 183–194 (PSKHGDHSDSKT) are compositionally biased toward basic and acidic residues. A compositionally biased stretch (polar residues) spans 195–208 (YESPISNSQAASLS). The span at 308 to 322 (SKHKKRPKRLSKFKQ) shows a compositional bias: basic residues. Positions 323–338 (AKLETKKSGNKDHATS) are enriched in basic and acidic residues. Polar residues-rich tracts occupy residues 339-360 (SEKLSLGNESIHSINETRSSSI) and 548-573 (HSNATCTIKNDDLSNTLNNRAANTKL). Basic and acidic residues predominate over residues 574–603 (NPKEEDKSTVESELKAPPKEKSSETSKEYL).

Its subcellular location is the cytoplasm. This is an uncharacterized protein from Schizosaccharomyces pombe (strain 972 / ATCC 24843) (Fission yeast).